Reading from the N-terminus, the 337-residue chain is DNA replication regulator sld2 (337 aa).

2 positions are modified to phosphothreonine; by cdc2: Thr60 and Thr74. Residues 71–97 are disordered; that stretch reads KFQTPTKQRAETEANESPKAPRNDYLQ. At Ser87 the chain carries Phosphoserine; by cdc2. Phosphothreonine; by cdc2 occurs at positions 99 and 154. Residue Ser183 is modified to Phosphoserine. The segment at 258–302 is disordered; sequence SMNLSKSHLEGLPEIDEDAENGIDDNEDTTASKDSSPFLDLQSER. Residues 270-285 show a composition bias toward acidic residues; that stretch reads PEIDEDAENGIDDNED.

This sequence belongs to the SLD2 family. As to quaternary structure, interacts with rad4. Post-translationally, phosphorylated by cdc2 at the onset of S-phase.

Its subcellular location is the cytoplasm. The protein localises to the nucleus. In terms of biological role, has a role in the initiation of DNA replication. Required at S-phase checkpoint. This Schizosaccharomyces pombe (strain 972 / ATCC 24843) (Fission yeast) protein is DNA replication regulator sld2 (drc1).